The following is a 611-amino-acid chain: MSLLATVGPTGGVKNRLDIVDFVRDEKFFTLYVRALQAIQDKDQADYSSFFQLSGIHGLPFTPWAKPKDTPTVPYESGYCTHSQVLFPTWHRVYVSIYEQVLQEAAKGIAKKFTVHKKEWVQAAEDLRQPYWDTGFALVPPDEIIKLEQVKITNYDGTKITVRNPILRYSFHPIDPSFSGYPNFDTWRTTVRNPDADKKENIPALIAKLDLEADSTREKTYNMLKFNANWEAFSNHGEFDDTHANSLEAVHDDIHGFVGRGAIRGHMTHALFAAFDPIFWLHHSNVDRHLSLWQALYPGVWVTQGPEREGSMGFAPGTELNKDSALEPFYETEDKPWTSVPLTDTALLNYSYPDFDKVKGGTPDLVRDYINDHIDRRYGIKKSEGGKNPALDLLSDFKGVTHDHNEDLKMFDWTIQASWKKFELDDSFAIIFYFAADGSTNVTKENYIGSINIFRGTTPTNCANCRTQDNLVQEGFVHLDRFIARDLDTFDPQAVHRYLKEKKLSYKVVADDHSVTLKSLRIRVQGRPLHLPPGVSFPRLDKNIPIVNFDDVLDLVTGVVNIGLTAVGATAGVAIGVVGATAGTAIGVAGAATDAVTNIAKGGLGALGRIF.

Cu cation is bound by residues His57, His82, His91, His251, His255, and His283. Residues Cys80–His82 constitute a cross-link (2'-(S-cysteinyl)-histidine (Cys-His)). His255 is a substrate binding site. Residues Ile380–Phe611 constitute a propeptide, removed in mature form.

It belongs to the tyrosinase family. In terms of assembly, heterotetramer. The cofactor is Cu(2+). Post-translationally, the C-ter is probably cleaved after Gly-379 since the mature active protein is smaller than the protein encoded by the gene.

The catalysed reaction is 2 L-dopa + O2 = 2 L-dopaquinone + 2 H2O. The enzyme catalyses L-tyrosine + O2 = L-dopaquinone + H2O. Functionally, copper-containing oxidase that catalyzes both the o-hydroxylation of monophenols and the subsequent oxidation of the resulting o-diphenols into reactive o-quinones, which evolve spontaneously to produce intermediates, which associate in dark brown pigments. Involved in the initial step of melanin synthesis. Melanins constitute a mechanism of defense and resistance to stress such as UV radiations, free radicals, gamma rays, dehydratation and extreme temperatures, and contribute to the fungal cell-wall resistance against hydrolytic enzymes in avoiding cellular lysis. Fungal pigments are also involved in the formation and stability of spores. This Agaricus bisporus (White button mushroom) protein is Polyphenol oxidase 4 (PPO4).